The primary structure comprises 348 residues: Rhodopsin (348 aa).

The Extracellular segment spans residues 1-33; the sequence is TEGPFFYIPMVNTSGVVRSPYEYPQYYLVNPAA. N-linked (GlcNAc...) asparagine glycosylation is present at N12. The helical transmembrane segment at 34 to 58 threads the bilayer; the sequence is YAILGAYMFFLIIIGFPVNFMTLYV. Over 59–70 the chain is Cytoplasmic; the sequence is TLEHKKLRTPLN. The helical transmembrane segment at 71–93 threads the bilayer; sequence YILLNLAVADLFMVIGGFTTTMY. At 94–107 the chain is on the extracellular side; it reads SSMHGYFVLGRLGC. Residues C107 and C184 are joined by a disulfide bond. A helical membrane pass occupies residues 108-130; it reads NMEGFSATLGGMISLWSLAVLAI. Residues 131–133 carry the 'Ionic lock' involved in activated form stabilization motif; that stretch reads ERW. Topologically, residues 131 to 149 are cytoplasmic; sequence ERWVVVCKPISNFRFGENH. A helical membrane pass occupies residues 150-170; the sequence is AIMGVSLTWFMALACTVPPLV. Topologically, residues 171–199 are extracellular; the sequence is GWSRYIPEGMQCSCGIDYYTRAEGFNNES. N197 is a glycosylation site (N-linked (GlcNAc...) asparagine). A helical transmembrane segment spans residues 200–221; the sequence is FVLYMFFCHFLVPLVIIFFCYG. The Cytoplasmic segment spans residues 222 to 249; sequence RLLCAVKEAAAAQQESETTQRAEREVTR. The chain crosses the membrane as a helical span at residues 250-271; that stretch reads MVIIMVIGFLVCWLPYASVAWF. Over 272–283 the chain is Extracellular; sequence IFTHQGSEFGPL. A helical transmembrane segment spans residues 284–305; sequence FMTIPAFFAKSSSIYNPMIYIC. The residue at position 293 (K293) is an N6-(retinylidene)lysine. The Cytoplasmic segment spans residues 306–348; that stretch reads MNKQFRNCMITTLFCGKNPFEGEEEGASSTKTEASSASSVSPA. The S-palmitoyl cysteine moiety is linked to residue C320. The segment at 327-348 is disordered; it reads GEEEGASSTKTEASSASSVSPA. Positions 332–348 are enriched in low complexity; that stretch reads ASSTKTEASSASSVSPA.

Belongs to the G-protein coupled receptor 1 family. Opsin subfamily. Phosphorylated on some or all of the serine and threonine residues present in the C-terminal region. Post-translationally, contains one covalently linked retinal chromophore.

Its subcellular location is the membrane. It localises to the cell projection. The protein localises to the cilium. It is found in the photoreceptor outer segment. Functionally, photoreceptor required for image-forming vision at low light intensity. While most salt water fish species use retinal as chromophore, most freshwater fish use 3-dehydroretinal, or a mixture of retinal and 3-dehydroretinal. Light-induced isomerization of 11-cis to all-trans retinal triggers a conformational change that activates signaling via G-proteins. Subsequent receptor phosphorylation mediates displacement of the bound G-protein alpha subunit by arrestin and terminates signaling. This chain is Rhodopsin (rho), found in Sargocentron punctatissimum (Speckled squirrelfish).